The chain runs to 167 residues: Leptin (167 aa).

The N-terminal stretch at 1–21 (MYWRTLWGFLWLWPYLFYIQA) is a signal peptide. C117 and C167 are joined by a disulfide.

It belongs to the leptin family.

It is found in the secreted. In terms of biological role, key player in the regulation of energy balance and body weight control. Once released into the circulation, has central and peripheral effects by binding LEPR, found in many tissues, which results in the activation of several major signaling pathways. In the hypothalamus, acts as an appetite-regulating factor that induces a decrease in food intake and an increase in energy consumption by inducing anorexinogenic factors and suppressing orexigenic neuropeptides, also regulates bone mass and secretion of hypothalamo-pituitary-adrenal hormones. In the periphery, increases basal metabolism, influences reproductive function, regulates pancreatic beta-cell function and insulin secretion, is pro-angiogenic for endothelial cell and affects innate and adaptive immunity. In the arcuate nucleus of the hypothalamus, activates by depolarization POMC neurons inducing FOS and SOCS3 expression to release anorexigenic peptides and inhibits by hyperpolarization NPY neurons inducing SOCS3 with a consequent reduction on release of orexigenic peptides. In addition to its known satiety inducing effect, has a modulatory role in nutrient absorption. In the intestine, reduces glucose absorption by enterocytes by activating PKC and leading to a sequential activation of p38, PI3K and ERK signaling pathways which exerts an inhibitory effect on glucose absorption. Acts as a growth factor on certain tissues, through the activation of different signaling pathways increases expression of genes involved in cell cycle regulation such as CCND1, via JAK2-STAT3 pathway, or VEGFA, via MAPK1/3 and PI3K-AKT1 pathways. May also play an apoptotic role via JAK2-STAT3 pathway and up-regulation of BIRC5 expression. Pro-angiogenic, has mitogenic activity on vascular endothelial cells and plays a role in matrix remodeling by regulating the expression of matrix metalloproteinases (MMPs) and tissue inhibitors of metalloproteinases (TIMPs). In innate immunity, modulates the activity and function of neutrophils by increasing chemotaxis and the secretion of oxygen radicals. Increases phagocytosis by macrophages and enhances secretion of pro-inflammatory mediators. Increases cytotoxic ability of NK cells. Plays a pro-inflammatory role, in synergy with IL1B, by inducing NOS2 which promotes the production of IL6, IL8 and Prostaglandin E2, through a signaling pathway that involves JAK2, PI3K, MAP2K1/MEK1 and MAPK14/p38. In adaptive immunity, promotes the switch of memory T-cells towards T helper-1 cell immune responses. Increases CD4(+)CD25(-) T-cell proliferation and reduces autophagy during TCR (T-cell receptor) stimulation, through MTOR signaling pathway activation and BCL2 up-regulation. This Macaca mulatta (Rhesus macaque) protein is Leptin (LEP).